The primary structure comprises 243 residues: Small ribosomal subunit protein uS5 (243 aa).

Residues 1–54 (MSDNEKETQVAEETQNTQATAESSNNDERRGRRNNRGGEGRRGDRRGRREDNHE) are disordered. A compositionally biased stretch (polar residues) spans 11 to 24 (AEETQNTQATAESS). The segment covering 26–54 (NDERRGRRNNRGGEGRRGDRRGRREDNHE) has biased composition (basic and acidic residues). One can recognise an S5 DRBM domain in the interval 57-120 (MLDRVVTINR…LDAKKHLFNV (64 aa)).

It belongs to the universal ribosomal protein uS5 family. Part of the 30S ribosomal subunit. Contacts proteins S4 and S8.

In terms of biological role, with S4 and S12 plays an important role in translational accuracy. Functionally, located at the back of the 30S subunit body where it stabilizes the conformation of the head with respect to the body. This is Small ribosomal subunit protein uS5 from Bifidobacterium animalis subsp. lactis (strain AD011).